The sequence spans 1299 residues: DExH-box ATP-dependent RNA helicase DExH6 (1299 aa).

The region spanning 15–82 (PTSVEATRIW…QRRLSIFKSR (68 aa)) is the R3H domain. Residues 197–366 (TSAVESNQVI…FGGCPVVRVP (170 aa)) enclose the Helicase ATP-binding domain. 210 to 217 (GETGCGKT) contacts ATP. The DEIH box motif lies at 313 to 316 (DEIH). A Helicase C-terminal domain is found at 537–711 (LIQQLMRKIC…ELCLQVKILD (175 aa)). Disordered regions lie at residues 987 to 1039 (PTGS…MMSS) and 1175 to 1299 (IPRQ…AEQK). Residues 992 to 1006 (DSDDSNEEEEDDEEV) show a composition bias toward acidic residues. Positions 1007 to 1020 (AANTNEEVAANTNE) are enriched in low complexity. Residues 1023–1032 (MDIHKEESRR) are compositionally biased toward basic and acidic residues. 3 stretches are compositionally biased toward polar residues: residues 1176–1193 (PRQQ…NNTD), 1204–1214 (NPTNRINQPEA), and 1239–1251 (PSDQ…QHNT). The Bipartite nuclear localization signal signature appears at 1182–1200 (KQRNPKATNNTDSGKKKEK). The Bipartite nuclear localization signal signature appears at 1267–1283 (KKTKTRSGNNSDSGKKK). The segment covering 1279 to 1299 (SGKKKEQYIPKRQREDKAEQK) has biased composition (basic and acidic residues).

Belongs to the DExH box helicase family. Specifically expressed in the tapetum and vascular tissues.

It is found in the nucleus. The enzyme catalyses ATP + H2O = ADP + phosphate + H(+). Its function is as follows. May function as an ATP-dependent RNA/DNA helicase. This Arabidopsis thaliana (Mouse-ear cress) protein is DExH-box ATP-dependent RNA helicase DExH6.